A 314-amino-acid chain; its full sequence is tRNA dimethylallyltransferase 1 (314 aa).

An ATP-binding site is contributed by 17–24; it reads GPTAAGKT. 19–24 provides a ligand contact to substrate; the sequence is TAAGKT. Positions 42–45 are interaction with substrate tRNA; that stretch reads DSRQ.

This sequence belongs to the IPP transferase family. In terms of assembly, monomer. It depends on Mg(2+) as a cofactor.

The catalysed reaction is adenosine(37) in tRNA + dimethylallyl diphosphate = N(6)-dimethylallyladenosine(37) in tRNA + diphosphate. In terms of biological role, catalyzes the transfer of a dimethylallyl group onto the adenine at position 37 in tRNAs that read codons beginning with uridine, leading to the formation of N6-(dimethylallyl)adenosine (i(6)A). The polypeptide is tRNA dimethylallyltransferase 1 (Syntrophotalea carbinolica (strain DSM 2380 / NBRC 103641 / GraBd1) (Pelobacter carbinolicus)).